The following is a 76-amino-acid chain: Conotoxin Lt6.1 (76 aa).

Positions 1 to 22 (MKLTCVLIIAVLFLMDNQLITA) are cleaved as a signal peptide. Residues 23–48 (DYPRDEQVYRAVRLRDAMQKSKGSGS) constitute a propeptide that is removed on maturation. Intrachain disulfides connect cysteine 49–cysteine 62, cysteine 56–cysteine 67, and cysteine 61–cysteine 75.

Belongs to the conotoxin O1 superfamily. In terms of tissue distribution, expressed by the venom duct.

It localises to the secreted. In Conus litteratus (Lettered cone), this protein is Conotoxin Lt6.1.